The sequence spans 107 residues: Endonuclease ALBA3 (107 aa).

Residues Lys-23 and Lys-32 each carry the N6-acetyllysine modification.

Belongs to the histone-like Alba family. As to quaternary structure, homodimer. Interacts (acetylated and unacetylated) with Sir2A. A divalent metal cation serves as cofactor. Acetylated. Exists in both acetylated and unacetylated forms but predominantly in an acetylated form. Deacetylated by Sir2A.

The protein localises to the nucleus. It localises to the chromosome. The protein resides in the telomere. It is found in the cytoplasm. Mild acetylation lowers protein interaction with DNA and high acetylation abolishes DNA-binding activity. DNA binding and endonuclease activity is modulated via deacetylation of Lys-23 by Sir2A. Inhibited in the presence of EDTA and EGTA. Functionally, possesses DNA-binding and endonuclease activities. Binds DNA cooperatively in sequence-independent manner at the DNA minor groove. Exhibits apurinic/apyrimidinic site-driven endonuclease activity. Binds RNA; shows high affinity for poly(A) and a lower affinity for poly(U) templates. In vitro, prevents transcription after DNA binding. Associates with the telomeric region, the subtelomeric TARE6 repeat sequence and the var gene promoters. This is Endonuclease ALBA3 from Plasmodium falciparum (isolate 3D7).